A 607-amino-acid chain; its full sequence is UvrABC system protein C (607 aa).

In terms of domain architecture, GIY-YIG spans 16–94; that stretch reads HLPGVYRHLD…IKSLRPRYNI (79 aa). The 36-residue stretch at 203-238 folds into the UVR domain; it reads REVMDEIEARMQQASGELRFEEAAVLRDQMGSLSKV.

It belongs to the UvrC family. Interacts with UvrB in an incision complex.

It is found in the cytoplasm. Its function is as follows. The UvrABC repair system catalyzes the recognition and processing of DNA lesions. UvrC both incises the 5' and 3' sides of the lesion. The N-terminal half is responsible for the 3' incision and the C-terminal half is responsible for the 5' incision. The protein is UvrABC system protein C of Bordetella avium (strain 197N).